Consider the following 123-residue polypeptide: Alpha-lactalbumin (123 aa).

Residues 1–123 (KQFTKCELSQ…KLEQWLCEEL (123 aa)) enclose the C-type lysozyme domain. Disulfide bonds link C6/C120, C28/C111, C61/C77, and C73/C91. Residues K79, D82, D84, D87, and D88 each contribute to the Ca(2+) site.

Belongs to the glycosyl hydrolase 22 family. In terms of assembly, lactose synthase (LS) is a heterodimer of a catalytic component, beta1,4-galactosyltransferase (beta4Gal-T1) and a regulatory component, alpha-lactalbumin (LA). As to expression, mammary gland specific. Secreted in milk.

The protein resides in the secreted. Functionally, regulatory subunit of lactose synthase, changes the substrate specificity of galactosyltransferase in the mammary gland making glucose a good acceptor substrate for this enzyme. This enables LS to synthesize lactose, the major carbohydrate component of milk. In other tissues, galactosyltransferase transfers galactose onto the N-acetylglucosamine of the oligosaccharide chains in glycoproteins. The chain is Alpha-lactalbumin (LALBA) from Equus asinus (Donkey).